Reading from the N-terminus, the 262-residue chain is Small ribosomal subunit protein uS2 (262 aa).

Positions Val-228–Asn-262 are disordered. Residues Asp-243–Glu-254 show a composition bias toward acidic residues.

This sequence belongs to the universal ribosomal protein uS2 family.

This chain is Small ribosomal subunit protein uS2, found in Staphylococcus epidermidis (strain ATCC 35984 / DSM 28319 / BCRC 17069 / CCUG 31568 / BM 3577 / RP62A).